We begin with the raw amino-acid sequence, 736 residues long: 3',5'-cyclic-AMP phosphodiesterase 4B (736 aa).

2 disordered regions span residues glutamine 51–leucine 77 and aspartate 96–serine 116. Serine 56 is modified (phosphoserine). Serine 290 carries the post-translational modification Phosphoserine. Positions valine 330–serine 659 constitute a PDEase domain. The active-site Proton donor is histidine 406. Histidine 406 serves as a coordination point for 3',5'-cyclic AMP. Residues histidine 406 and histidine 410 each coordinate AMP. Residues histidine 410, histidine 446, aspartate 447, and aspartate 564 each coordinate Zn(2+). Aspartate 447, aspartate 564, glutamine 615, and phenylalanine 618 together coordinate AMP. Position 447 (aspartate 447) interacts with Mg(2+). Aspartate 447 serves as a coordination point for Mn(2+). Residues glutamine 615 and phenylalanine 618 each contribute to the 3',5'-cyclic AMP site. Serine 659 and serine 661 each carry phosphoserine. A disordered region spans residues glutamate 685–threonine 736.

The protein belongs to the cyclic nucleotide phosphodiesterase family. PDE4 subfamily. Interacts with DISC1. Requires Zn(2+) as cofactor. Mg(2+) serves as cofactor. Mn(2+) is required as a cofactor. As to expression, widely expressed. Expressed in brain, heart, lung and liver. In terms of tissue distribution, expressed in liver and brain.

The protein resides in the cytoplasm. The protein localises to the cell membrane. It catalyses the reaction 3',5'-cyclic AMP + H2O = AMP + H(+). It functions in the pathway purine metabolism; 3',5'-cyclic AMP degradation; AMP from 3',5'-cyclic AMP: step 1/1. Inhibited by rolipram. Functionally, hydrolyzes the second messenger cAMP, which is a key regulator of many important physiological processes. This Rattus norvegicus (Rat) protein is 3',5'-cyclic-AMP phosphodiesterase 4B.